We begin with the raw amino-acid sequence, 338 residues long: MGAVWSALLVGGGLAGALILWLLRGDSGAPGKDGVAEPPQKGAPPGEAAAPGDGPGGGGSGGLSPEPSDRELVSKAEHLRESNGHLISESKDLGNLPEAQRLQNVGADWVNAREFVPVGKIPDTHSRADSEAARNQSPGSHGGEWRLPKGQETAVKVAGSVAAKLPSSSLLVDRAKAVSQDQAGHEDWEVVSRHSSWGSVGLGGSLEASRLSLNQRMDDSTNSLVGGRGWEVDGKVASLKPQQVSIQFQVHYTTNTDVQFIAVTGDHESLGRWNTYIPLHYCKDGLWSHSVFLPADTVVEWKFVLVENKEVTRWEECSNRFLQTGHEDKVVHGWWGIH.

Residues 1 to 6 (MGAVWS) lie on the Extracellular side of the membrane. A helical transmembrane segment spans residues 7–23 (ALLVGGGLAGALILWLL). At 24–338 (RGDSGAPGKD…KVVHGWWGIH (315 aa)) the chain is on the cytoplasmic side. 2 disordered regions span residues 30 to 73 (PGKD…RELV) and 120 to 148 (KIPDTHSRADSEAARNQSPGSHGGEWRLP). Positions 36-52 (AEPPQKGAPPGEAAAPG) are enriched in low complexity. Residues 53-62 (DGPGGGGSGG) are compositionally biased toward gly residues. S68 bears the Phosphoserine mark. Basic and acidic residues predominate over residues 122–132 (PDTHSRADSEA). S140, S167, and S179 each carry phosphoserine. Residues 185 to 191 (HEDWEVV) carry the LIR motif. S195, S196, S205, S209, S212, S220, and S223 each carry phosphoserine. In terms of domain architecture, CBM20 spans 238–337 (SLKPQQVSIQ…DKVVHGWWGI (100 aa)).

In terms of assembly, interacts with the ATG8 family proteins GABARAP and GABARAPL1. Interacts with several glycogen-associated proteins, such as GYS2 (liver glycogen synthase), GDE (glycogen debranching enzyme), GBE1 (glycogen branching enzyme 1) and EPM2A (Laforin). Post-translationally, ubiquitinated, which leads to proteasomal degradation. Expressed at high level in glycogen-accumulating organs such as muscle and liver. Trace signals are also found in brain, kidney, and pancreas.

It localises to the preautophagosomal structure membrane. The protein localises to the endoplasmic reticulum membrane. The protein resides in the cell membrane. Its subcellular location is the sarcolemma. It is found in the T-tubule. In terms of biological role, acts as a cargo receptor for glycogen. Delivers its cargo to an autophagic pathway called glycophagy, resulting in the transport of glycogen to lysosomes. This Mus musculus (Mouse) protein is Starch-binding domain-containing protein 1.